A 346-amino-acid polypeptide reads, in one-letter code: MAHRPRWTLSQVTELFEKPLLDLLFEAQQVHRQHFDPRQVQVSTLLSIKTGACPEDCKYCPQSSRYKTGLEAERLMEVEQVLESARKAKAAGSTRFCMGAAWKNPHERDMPYLEQMVQGVKAMGLEACMTLGTLSESQAQRLANAGLDYYNHNLDTSPEFYGNIITTRTYQERLDTLEKVRDAGIKVCSGGIVGLGETVKDRAGLLLQLANLPTPPESVPINMLVKVEGTPLADNDDVDAFDFIRTIAVARIMMPTSYVRLSAGREQMNEQTQAMCFMAGANSIFYGCKLLTTPNPEEDKDLQLFRKLGLNPQQTAVLAGDNEQQQRLEQALMTPDTDEYYNAAAL.

The Radical SAM core domain occupies 38–256; that stretch reads RQVQVSTLLS…IAVARIMMPT (219 aa). Cys53, Cys57, and Cys60 together coordinate [4Fe-4S] cluster. Cys97, Cys128, Cys188, and Arg260 together coordinate [2Fe-2S] cluster.

This sequence belongs to the radical SAM superfamily. Biotin synthase family. Homodimer. [4Fe-4S] cluster serves as cofactor. The cofactor is [2Fe-2S] cluster.

The catalysed reaction is (4R,5S)-dethiobiotin + (sulfur carrier)-SH + 2 reduced [2Fe-2S]-[ferredoxin] + 2 S-adenosyl-L-methionine = (sulfur carrier)-H + biotin + 2 5'-deoxyadenosine + 2 L-methionine + 2 oxidized [2Fe-2S]-[ferredoxin]. It functions in the pathway cofactor biosynthesis; biotin biosynthesis; biotin from 7,8-diaminononanoate: step 2/2. Functionally, catalyzes the conversion of dethiobiotin (DTB) to biotin by the insertion of a sulfur atom into dethiobiotin via a radical-based mechanism. The protein is Biotin synthase of Escherichia coli (strain SE11).